A 317-amino-acid polypeptide reads, in one-letter code: Flagellar hook-associated protein 3 (317 aa).

This sequence belongs to the bacterial flagellin family.

It is found in the secreted. It localises to the bacterial flagellum. This chain is Flagellar hook-associated protein 3 (flgL), found in Salmonella typhimurium (strain LT2 / SGSC1412 / ATCC 700720).